The chain runs to 366 residues: Ribosomal RNA large subunit methyltransferase M (366 aa).

S-adenosyl-L-methionine is bound by residues S188, 221–224 (CPGG), D240, D260, and D277. The active-site Proton acceptor is the K306.

This sequence belongs to the class I-like SAM-binding methyltransferase superfamily. RNA methyltransferase RlmE family. RlmM subfamily. In terms of assembly, monomer.

It localises to the cytoplasm. It catalyses the reaction cytidine(2498) in 23S rRNA + S-adenosyl-L-methionine = 2'-O-methylcytidine(2498) in 23S rRNA + S-adenosyl-L-homocysteine + H(+). Functionally, catalyzes the 2'-O-methylation at nucleotide C2498 in 23S rRNA. In Klebsiella pneumoniae subsp. pneumoniae (strain ATCC 700721 / MGH 78578), this protein is Ribosomal RNA large subunit methyltransferase M.